The following is a 78-amino-acid chain: uncharacterized protein (78 aa).

2 helical membrane passes run 5–24 (LALLILVIPGAISALGIKLM) and 39–61 (LWLQGLSGFIFFAIGLYVLAGFI).

It is found in the cell membrane. This is an uncharacterized protein from Bacillus subtilis (strain 168).